A 152-amino-acid polypeptide reads, in one-letter code: Troponin C (152 aa).

Thr1 is subject to N-acetylthreonine. EF-hand domains are found at residues 9–44 (KQILDAKQAFCNVDKKKEGTVSCKDLGAIFKSLGLL), 45–80 (VKDDKIKDWSDEMDEEATGRLNCDAWIQLFERKLKE), 82–117 (LDERELKEAFRVLDKEKKGVIKVDVLRWILSSLGDE), and 118–152 (LTEEEIENMIAETDTDGSGTVDYEEFKCLMMSSDA). 5 residues coordinate Ca(2+): Asp131, Asp133, Ser135, Thr137, and Glu142.

It belongs to the troponin C family.

In terms of biological role, troponin is the central regulatory protein of striated muscle contraction. Tn consists of three components: Tn-I which is the inhibitor of actomyosin ATPase, Tn-T which contains the binding site for tropomyosin and Tn-C. The binding of calcium to Tn-C abolishes the inhibitory action of Tn on actin filaments. In Mizuhopecten yessoensis (Japanese scallop), this protein is Troponin C.